The chain runs to 752 residues: Lid2 complex component jmj3 (752 aa).

Positions 34–75 constitute a JmjN domain; that stretch reads IPVVEPKISEFVDMESFIRRVERLGKKYGAIKVVRPSSVLNP. A JmjC domain is found at 162 to 333; the sequence is YTNRPSIPFY…NYEFSNLRRL (172 aa). 2 stretches are compositionally biased toward polar residues: residues 391 to 402 and 409 to 423; these read SFSQRDFDSPNS and LMSNHESASTEHFNS. The interval 391–438 is disordered; that stretch reads SFSQRDFDSPNSINPPSPLMSNHESASTEHFNSTTTTEKELSSLHVGE. Positions 427-438 are enriched in basic and acidic residues; it reads TEKELSSLHVGE.

In terms of assembly, component of the Lid2 complex composed of ash2, jmj3, lid2, sdc1 and snt2.

The protein localises to the nucleus. In Schizosaccharomyces pombe (strain 972 / ATCC 24843) (Fission yeast), this protein is Lid2 complex component jmj3.